A 341-amino-acid chain; its full sequence is tRNA N6-adenosine threonylcarbamoyltransferase (341 aa).

The Fe cation site is built by His111 and His115. Substrate contacts are provided by residues 134–138 (LVSGG), Asp167, Gly180, and Asn276. Asp304 provides a ligand contact to Fe cation.

Belongs to the KAE1 / TsaD family. It depends on Fe(2+) as a cofactor.

The protein resides in the cytoplasm. It carries out the reaction L-threonylcarbamoyladenylate + adenosine(37) in tRNA = N(6)-L-threonylcarbamoyladenosine(37) in tRNA + AMP + H(+). In terms of biological role, required for the formation of a threonylcarbamoyl group on adenosine at position 37 (t(6)A37) in tRNAs that read codons beginning with adenine. Is involved in the transfer of the threonylcarbamoyl moiety of threonylcarbamoyl-AMP (TC-AMP) to the N6 group of A37, together with TsaE and TsaB. TsaD likely plays a direct catalytic role in this reaction. The sequence is that of tRNA N6-adenosine threonylcarbamoyltransferase from Ectopseudomonas mendocina (strain ymp) (Pseudomonas mendocina).